Reading from the N-terminus, the 245-residue chain is MKSGIYQIKNTLNNKVYVGSAKDFEKRWKRHFKDLEKGCHSSIKLQRSFNKHGNVFECSILEEIPYEKDLIIERENFWIKELNSKINGYNIADATFGDTCSTHPLKEEIIKKRSETVKAKMLKLGPDGRKALYSKPGSKNGRWNPETHKFCKCGVRIQTSAYTCSKCRNRSGENNSFFNHKHSDITKSKISEKMKGKKPSNIKKISCDGVIFDCAADAARHFKISSGLVTYRVKSDKWNWFYINA.

Residues 1 to 88 enclose the GIY-YIG domain; sequence MKSGIYQIKN…IKELNSKING (88 aa).

It to endonucleases of group I introns of fungi and phage. The cofactor is Mg(2+).

This endonuclease is specific to the thymidylate synthase (td) gene splice junction and is involved in intron homing. In Enterobacteria phage T4 (Bacteriophage T4), this protein is Intron-associated endonuclease 1 (ITEVIR).